The following is a 618-amino-acid chain: Grainyhead-like protein 1 homolog (618 aa).

Residues 1-91 (MTQEYDNKRP…EVEHPEPDHS (91 aa)) form a transcription activation region. Residues 74 to 92 (RRSSTAKPEVEHPEPDHSK) show a composition bias toward basic and acidic residues. The disordered stretch occupies residues 74–94 (RRSSTAKPEVEHPEPDHSKRN). T208 bears the Phosphothreonine mark. Positions 248–474 (SGNNFEYTLE…DLDTQPVLFI (227 aa)) constitute a Grh/CP2 DB domain. Interaction with DNA stretches follow at residues 380–389 (TDFSSQKGVK) and 427–430 (RKIR).

This sequence belongs to the grh/CP2 family. Grainyhead subfamily. Binds DNA as homodimer. Homodimer, also forms heterodimers with GRHL2 or GRHL3. Methylation at Arg-9 and Lys-116 may be involved in regulating transcriptional activation.

It localises to the nucleus. Transcription factor involved in epithelial development. Binds directly to the consensus DNA sequence 5'-AACCGGTT-3'. Important regulator of DSG1 in the context of hair anchorage and epidermal differentiation, participates in the maintenance of the skin barrier. There is no genetic interaction with GRHL3, nor functional cooperativity due to diverse target gene selectivity during epithelia development. May play a role in regulating glucose homeostasis and insulin signaling. This Pongo abelii (Sumatran orangutan) protein is Grainyhead-like protein 1 homolog (GRHL1).